Here is a 219-residue protein sequence, read N- to C-terminus: MASAGLQLLAFILALSGVSGVLTATLLPNWKVNVDVDSNIITAIVQLHGLWMDCTWYSTGMFSCALKHSILSLPIHVQAARATMVLACVLSALGICTSTVGMKCTRLGGDRETKSHASFAGGVCFMSAGISSLISTVWYTKEIIANFLDLTVPESNKHEPGGAIYIGFISAMLLFISGMIFCTSCIKRNPEARLDPPTQQPISNTQLENNSTHNLKDYV.

The Cytoplasmic portion of the chain corresponds to 1–7; the sequence is MASAGLQ. Residues 8–28 form a helical membrane-spanning segment; that stretch reads LLAFILALSGVSGVLTATLLP. The Extracellular portion of the chain corresponds to 29–81; sequence NWKVNVDVDSNIITAIVQLHGLWMDCTWYSTGMFSCALKHSILSLPIHVQAAR. A helical transmembrane segment spans residues 82–102; it reads ATMVLACVLSALGICTSTVGM. Topologically, residues 103–118 are cytoplasmic; the sequence is KCTRLGGDRETKSHAS. The chain crosses the membrane as a helical span at residues 119 to 139; sequence FAGGVCFMSAGISSLISTVWY. The Extracellular segment spans residues 140–160; that stretch reads TKEIIANFLDLTVPESNKHEP. A helical transmembrane segment spans residues 161 to 181; it reads GGAIYIGFISAMLLFISGMIF. Residues 182–219 are Cytoplasmic-facing; that stretch reads CTSCIKRNPEARLDPPTQQPISNTQLENNSTHNLKDYV. A disordered region spans residues 193–219; the sequence is RLDPPTQQPISNTQLENNSTHNLKDYV. Polar residues predominate over residues 200 to 213; it reads QPISNTQLENNSTH.

The protein belongs to the claudin family.

The protein localises to the cell junction. It localises to the tight junction. The protein resides in the cell membrane. Functionally, plays a major role in tight junction-specific obliteration of the intercellular space, through calcium-independent cell-adhesion activity. The chain is Claudin-20 (CLDN20) from Homo sapiens (Human).